The sequence spans 337 residues: Adenosine deaminase (337 aa).

Zn(2+) contacts are provided by H15 and H17. 3 residues coordinate substrate: H17, D19, and G172. Residue H199 coordinates Zn(2+). The active-site Proton donor is E202. D279 provides a ligand contact to Zn(2+).

This sequence belongs to the metallo-dependent hydrolases superfamily. Adenosine and AMP deaminases family. Adenosine deaminase subfamily. It depends on Zn(2+) as a cofactor.

It catalyses the reaction adenosine + H2O + H(+) = inosine + NH4(+). The catalysed reaction is 2'-deoxyadenosine + H2O + H(+) = 2'-deoxyinosine + NH4(+). Functionally, catalyzes the hydrolytic deamination of adenosine and 2-deoxyadenosine. This chain is Adenosine deaminase, found in Enterococcus faecalis (strain ATCC 700802 / V583).